Here is a 437-residue protein sequence, read N- to C-terminus: Ribosomal protein uS12 methylthiotransferase RimO (437 aa).

An MTTase N-terminal domain is found at 4-114 (PRVSFVSLGC…VMNAVHEVAP (111 aa)). Positions 13, 49, 78, 145, 149, and 152 each coordinate [4Fe-4S] cluster. The region spanning 131 to 369 (LTPRHYAYLK…MAKQQQISTN (239 aa)) is the Radical SAM core domain. The TRAM domain maps to 372 to 437 (KKKVGKRLPV…DAYDLHGTAV (66 aa)).

The protein belongs to the methylthiotransferase family. RimO subfamily. [4Fe-4S] cluster is required as a cofactor.

The protein localises to the cytoplasm. The enzyme catalyses L-aspartate(89)-[ribosomal protein uS12]-hydrogen + (sulfur carrier)-SH + AH2 + 2 S-adenosyl-L-methionine = 3-methylsulfanyl-L-aspartate(89)-[ribosomal protein uS12]-hydrogen + (sulfur carrier)-H + 5'-deoxyadenosine + L-methionine + A + S-adenosyl-L-homocysteine + 2 H(+). Its function is as follows. Catalyzes the methylthiolation of an aspartic acid residue of ribosomal protein uS12. This Brucella abortus (strain S19) protein is Ribosomal protein uS12 methylthiotransferase RimO.